Consider the following 367-residue polypeptide: tRNA-specific 2-thiouridylase MnmA (367 aa).

ATP-binding positions include 12 to 19 (GMSGGVDS) and M38. The interaction with target base in tRNA stretch occupies residues 98–100 (NPD). Catalysis depends on C103, which acts as the Nucleophile. A disulfide bridge connects residues C103 and C200. An ATP-binding site is contributed by G128. Residues 150-152 (KDQ) form an interaction with tRNA region. The active-site Cysteine persulfide intermediate is the C200. An interaction with tRNA region spans residues 312 to 313 (RY).

Belongs to the MnmA/TRMU family. As to quaternary structure, interacts with TusE.

The protein resides in the cytoplasm. The catalysed reaction is S-sulfanyl-L-cysteinyl-[protein] + uridine(34) in tRNA + AH2 + ATP = 2-thiouridine(34) in tRNA + L-cysteinyl-[protein] + A + AMP + diphosphate + H(+). Functionally, catalyzes the 2-thiolation of uridine at the wobble position (U34) of tRNA(Lys), tRNA(Glu) and tRNA(Gln), leading to the formation of s(2)U34, the first step of tRNA-mnm(5)s(2)U34 synthesis. Sulfur is provided by IscS, via a sulfur-relay system. Binds ATP and its substrate tRNAs. This chain is tRNA-specific 2-thiouridylase MnmA, found in Serratia proteamaculans (strain 568).